We begin with the raw amino-acid sequence, 339 residues long: MTIQKNWQELIRPNKLQVSPGSDATRFATLVAEPLERGFGQTLGNALRRVLLSSLQGAAVQSVQIDGVLHEFSSIAGVREDVTDIVLNIKDISLKMQGEGPKRMVVKKQGPGVVTAGDIQTVGDIVVLNPDLQICTLDEGAEIRMEFTVNTGKGYVAAERNRPEDAPIGLIPVDSLYSPVRKVSYKVENTREGQILDYDKLTMTVETNGALTPDDAVAFAARILQDQLNVFVNFEEPRKEVTQEIIPDLAFNPAFLKKVDELELSVRSANCLKNDNIVYIGDLVQKSEAEMLRTPNFGRKSLNEIKEVLAQMGLHLGMEVPGWPPENIDELAKRFEDHY.

The interval 1–235 (MTIQKNWQEL…DQLNVFVNFE (235 aa)) is alpha N-terminal domain (alpha-NTD). The tract at residues 251-339 (FNPAFLKKVD…ELAKRFEDHY (89 aa)) is alpha C-terminal domain (alpha-CTD).

The protein belongs to the RNA polymerase alpha chain family. In terms of assembly, homodimer. The RNAP catalytic core consists of 2 alpha, 1 beta, 1 beta' and 1 omega subunit. When a sigma factor is associated with the core the holoenzyme is formed, which can initiate transcription.

It catalyses the reaction RNA(n) + a ribonucleoside 5'-triphosphate = RNA(n+1) + diphosphate. Its function is as follows. DNA-dependent RNA polymerase catalyzes the transcription of DNA into RNA using the four ribonucleoside triphosphates as substrates. The protein is DNA-directed RNA polymerase subunit alpha of Rhodopseudomonas palustris (strain BisB5).